The sequence spans 686 residues: WD repeat-containing protein 93 (686 aa).

A compositionally biased stretch (polar residues) spans methionine 1–glutamine 10. The segment at methionine 1–aspartate 40 is disordered. The segment covering threonine 29–aspartate 40 has biased composition (basic and acidic residues). The stretch at proline 410–valine 449 is one WD repeat.

The protein is WD repeat-containing protein 93 (WDR93) of Homo sapiens (Human).